Reading from the N-terminus, the 520-residue chain is Putative thymidine phosphorylase 1 (520 aa).

Belongs to the thymidine/pyrimidine-nucleoside phosphorylase family. Type 2 subfamily.

The catalysed reaction is thymidine + phosphate = 2-deoxy-alpha-D-ribose 1-phosphate + thymine. The polypeptide is Putative thymidine phosphorylase 1 (Cupriavidus necator (strain ATCC 17699 / DSM 428 / KCTC 22496 / NCIMB 10442 / H16 / Stanier 337) (Ralstonia eutropha)).